A 492-amino-acid chain; its full sequence is KRAB-A domain-containing protein 2 (492 aa).

Residues 36–117 (LFQEATAFEN…MREKFLMSVT (82 aa)) form the KRAB domain. Phosphoserine is present on S115. A Phosphothreonine modification is found at T117. Positions 247–415 (RGLAPKPMTF…SPFEAMFGYK (169 aa)) constitute an Integrase catalytic domain. A coiled-coil region spans residues 427–457 (RETVATLQTEEELEIAEEQLENSLWIRQEER). Residues 455 to 465 (EERAEIGADRS) are compositionally biased toward basic and acidic residues. The tract at residues 455–492 (EERAEIGADRSDMDDDMDPTPEASEPSTSQGTSGLLCW) is disordered. Residues 479–492 (EPSTSQGTSGLLCW) show a composition bias toward polar residues.

The chain is KRAB-A domain-containing protein 2 (KRBA2) from Homo sapiens (Human).